The following is a 179-amino-acid chain: Probable chorismate pyruvate-lyase (179 aa).

The substrate site is built by R82, L120, and E165.

This sequence belongs to the UbiC family.

The protein localises to the cytoplasm. The catalysed reaction is chorismate = 4-hydroxybenzoate + pyruvate. The protein operates within cofactor biosynthesis; ubiquinone biosynthesis. In terms of biological role, removes the pyruvyl group from chorismate, with concomitant aromatization of the ring, to provide 4-hydroxybenzoate (4HB) for the ubiquinone pathway. This is Probable chorismate pyruvate-lyase from Vibrio vulnificus (strain CMCP6).